A 282-amino-acid chain; its full sequence is Shikimate dehydrogenase (NADP(+)) (282 aa).

Residues 15–17 (SKS) and threonine 62 contribute to the shikimate site. Lysine 66 acts as the Proton acceptor in catalysis. Shikimate-binding residues include asparagine 87 and aspartate 103. Residues 127–131 (GAGGA), 151–156 (NRTHTK), and methionine 220 contribute to the NADP(+) site. Tyrosine 222 lines the shikimate pocket. Position 244 (glycine 244) interacts with NADP(+).

It belongs to the shikimate dehydrogenase family. As to quaternary structure, homodimer.

It carries out the reaction shikimate + NADP(+) = 3-dehydroshikimate + NADPH + H(+). It participates in metabolic intermediate biosynthesis; chorismate biosynthesis; chorismate from D-erythrose 4-phosphate and phosphoenolpyruvate: step 4/7. Its function is as follows. Involved in the biosynthesis of the chorismate, which leads to the biosynthesis of aromatic amino acids. Catalyzes the reversible NADPH linked reduction of 3-dehydroshikimate (DHSA) to yield shikimate (SA). The protein is Shikimate dehydrogenase (NADP(+)) of Shewanella baltica (strain OS223).